A 264-amino-acid chain; its full sequence is Thymidylate synthase (264 aa).

A dUMP-binding site is contributed by arginine 21. Histidine 51 is a (6R)-5,10-methylene-5,6,7,8-tetrahydrofolate binding site. Position 126-127 (126-127 (RR)) interacts with dUMP. Residue cysteine 146 is the Nucleophile of the active site. DUMP contacts are provided by residues 166–169 (RSGD), asparagine 177, and 207–209 (HLY). Aspartate 169 is a (6R)-5,10-methylene-5,6,7,8-tetrahydrofolate binding site. Residue alanine 263 participates in (6R)-5,10-methylene-5,6,7,8-tetrahydrofolate binding.

Belongs to the thymidylate synthase family. Bacterial-type ThyA subfamily. In terms of assembly, homodimer.

It is found in the cytoplasm. It catalyses the reaction dUMP + (6R)-5,10-methylene-5,6,7,8-tetrahydrofolate = 7,8-dihydrofolate + dTMP. Its pathway is pyrimidine metabolism; dTTP biosynthesis. Functionally, catalyzes the reductive methylation of 2'-deoxyuridine-5'-monophosphate (dUMP) to 2'-deoxythymidine-5'-monophosphate (dTMP) while utilizing 5,10-methylenetetrahydrofolate (mTHF) as the methyl donor and reductant in the reaction, yielding dihydrofolate (DHF) as a by-product. This enzymatic reaction provides an intracellular de novo source of dTMP, an essential precursor for DNA biosynthesis. The polypeptide is Thymidylate synthase (Brevibacillus brevis (strain 47 / JCM 6285 / NBRC 100599)).